The following is a 300-amino-acid chain: Recombination-promoting nuclease RpnC (300 aa).

This sequence belongs to the Rpn/YhgA-like nuclease family.

A low activity DNA endonuclease yielding 3'-hydroxyl ends. Upon expression enhances RecA-independent DNA recombination 2.9-fold, concomitantly reducing viability by 59% and inducing DNA damage as measured by induction of the SOS repair response. The sequence is that of Recombination-promoting nuclease RpnC from Escherichia coli (strain K12).